The primary structure comprises 208 residues: MGISRDNWHKRRKTGGKRKPVHKKRKYELGRPPSNTKLGPKRIHTVRVRGGNKKYRALRLDVGNFSWGSECCTRKTRIIDVVYNASNNELVRTKTLVKNCVILVDSAPFRQWYESHYALPLGRKKGAKLTPEEEDILNKKRSKKVQKKFDKRRKNSKISPLLDEQFQQGKLLACISSRPGQCGRADGYVLEGKELEFYLRKIKAKKGK.

A disordered region spans residues methionine 1 to proline 40. Residues tryptophan 8–lysine 26 are compositionally biased toward basic residues.

The protein belongs to the eukaryotic ribosomal protein eS8 family. As to quaternary structure, component of the small ribosomal subunit.

The protein resides in the cytoplasm. Component of the small ribosomal subunit. The ribosome is a large ribonucleoprotein complex responsible for the synthesis of proteins in the cell. This is Small ribosomal subunit protein eS8 (rps8) from Ictalurus punctatus (Channel catfish).